Here is a 375-residue protein sequence, read N- to C-terminus: uncharacterized protein (375 aa).

The span at 1–12 (MAGNKKQVKKNT) shows a compositional bias: basic residues. Disordered stretches follow at residues 1–76 (MAGN…EKKS) and 119–274 (KNKN…KEIK). Over residues 26–39 (DTSNLDTAVQTSAS) the composition is skewed to polar residues. Residues 129 to 141 (TATDGTTTTTNIP) show a composition bias toward low complexity. Residues 175 to 185 (DETHSHKEEPK) show a composition bias toward basic and acidic residues. Low complexity-rich tracts occupy residues 198-212 (SKQQ…SSSS) and 225-241 (PTPT…KSTP). Residues 256–274 (EQPKEKSSPAPVKKEKEIK) are compositionally biased toward basic and acidic residues. 2 helical membrane passes run 299 to 319 (VVYK…LVPL) and 327 to 347 (IYSY…TLFI). Residues 355–375 (ASKEQKSKSGNKKSTTRKVKA) form a disordered region. Residues 363–375 (SGNKKSTTRKVKA) show a composition bias toward basic residues.

The protein localises to the membrane. This is an uncharacterized protein from Dictyostelium discoideum (Social amoeba).